Here is a 499-residue protein sequence, read N- to C-terminus: Zinc finger protein PLAG1 (499 aa).

Positions methionine 1 to asparagine 33 are disordered. An interaction with KPNA2 region spans residues alanine 2–alanine 84. A Nuclear localization signal motif is present at residues lysine 22–arginine 25. C2H2-type zinc fingers lie at residues phenylalanine 34–histidine 56, tyrosine 62–histidine 86, histidine 92–histidine 114, phenylalanine 121–histidine 143, leucine 150–histidine 172, histidine 185–histidine 207, and phenylalanine 213–histidine 236. Positions lysine 41–lysine 242 are decreased nuclear import with localization in the nucleus but also in the cytoplasm. The repression domain; contains 3 sumoylation motifs and massively decrease transcription activity stretch occupies residues valine 243 to leucine 383. Residues valine 243–glutamine 499 form an activates transcription; Inhibition of nuclear import due to lack of NLS and KPNA2 interaction region. Glycyl lysine isopeptide (Lys-Gly) (interchain with G-Cter in SUMO) cross-links involve residues lysine 244 and lysine 263. The segment at glutamine 364 to serine 400 is disordered. Low complexity predominate over residues serine 369–serine 379. The massively activates transcription stretch occupies residues glutamate 384 to glutamine 499.

Belongs to the krueppel C2H2-type zinc-finger protein family. Interacts with KPNA2, which escorts protein to the nucleus via interaction with nuclear localization signal. Interacts with E3 SUMO-protein ligase PIAS1, PIAS2 and PIAS4. In terms of processing, sumoylated with SUMO1; which inhibits transcriptional activity, but does not affect nuclear localization. Blockers of sumoylation pathway such as SENP3 and inactive UBE2I increases transcriptional capacity. Sumoylation is increased in the presence of PIAS1. Post-translationally, acetylated by lysine acetyltransferase EP300; which activates transcriptional capacity. Lysine residues that are sumoylated also seem to be target for acetylation. As to expression, expressed in heart, spleen, lung, kidney, brain, testis and epididymis but not in salivary glands.

The protein localises to the nucleus. Functionally, transcription factor whose activation results in up-regulation of target genes, such as IGFII, leading to uncontrolled cell proliferation: when overexpressed in cultured cells, higher proliferation rate and transformation are observed. Other target genes such as CRLF1, CRABP2, CRIP2, PIGF are strongly induced in cells with PLAG1 induction. Proto-oncogene whose ectopic expression can trigger the development of pleomorphic adenomas of the salivary gland and lipoblastomas. Cooperates with CBFB-MYH11. This Rattus norvegicus (Rat) protein is Zinc finger protein PLAG1 (Plag1).